A 2238-amino-acid chain; its full sequence is Golgin subfamily A member 4 (2238 aa).

Residues 1-90 (MFKKLKQKIS…QTFAQKLQLR (90 aa)) form a disordered region. Phosphoserine is present on serine 10. Residues 12–41 (EQQQLQQALAPAQASSSSSTPTRTRSRTSS) are compositionally biased toward low complexity. Residue threonine 39 is modified to Phosphothreonine. A Phosphoserine modification is found at serine 41. Polar residues-rich tracts occupy residues 52 to 62 (NRENASTQATK) and 73 to 85 (SPSQ…TFAQ). Serine 93 and serine 100 each carry phosphoserine. 3 disordered regions span residues 132 to 154 (AAAF…NSDG), 1695 to 1744 (LKER…SQDC), and 1770 to 1789 (LEQG…HRAL). An interaction with MACF1 region spans residues 154–224 (GLSREQLLQR…EELQMDQQAK (71 aa)). The stretch at 156-2161 (SREQLLQRLR…RYEKNACAAT (2006 aa)) forms a coiled coil. Residues 1695-1711 (LKEREKQVHSLEDKLKN) show a composition bias toward basic and acidic residues. Positions 2178 to 2225 (LFGEPTEFEYLRKVMFEYMMGRETKTMAKVITTVLKFPDDQAQKILER) constitute a GRIP domain.

In terms of assembly, homodimer. Interacts with GTP-bound ARL1 and ARL3. Interacts with MACF1. Directly interacts with TBC1D23. Interacts with FAM91A1; this interaction may be mediated by TBC1D23. Ubiquitous. Highly expressed in oligodendrocyte precursors, particularly at a stage just prior to myelination.

The protein localises to the cytoplasm. Its subcellular location is the golgi apparatus membrane. It is found in the golgi apparatus. It localises to the trans-Golgi network membrane. Its function is as follows. Involved in vesicular trafficking at the Golgi apparatus level. May play a role in delivery of transport vesicles containing GPI-linked proteins from the trans-Golgi network through its interaction with MACF1. Involved in endosome-to-Golgi trafficking. This is Golgin subfamily A member 4 (Golga4) from Mus musculus (Mouse).